Consider the following 208-residue polypeptide: Protein JLP2 (208 aa).

The segment covering 185–194 (AKKNQKKKNK) has biased composition (basic residues). Residues 185–208 (AKKNQKKKNKQSKDEVTDDMQLEV) form a disordered region.

It belongs to the CCDC25 family.

Its subcellular location is the cytoplasm. In Saccharomyces cerevisiae (strain ATCC 204508 / S288c) (Baker's yeast), this protein is Protein JLP2 (JLP2).